The primary structure comprises 363 residues: Pyrimidine monooxygenase RutA (363 aa).

FMN is bound by residues 49 to 50 (IK), Asn-115, Glu-124, 140 to 141 (RY), and Ser-190.

This sequence belongs to the NtaA/SnaA/DszA monooxygenase family. RutA subfamily.

The catalysed reaction is uracil + FMNH2 + NADH + O2 = (Z)-3-ureidoacrylate + FMN + NAD(+) + H2O + H(+). It catalyses the reaction thymine + FMNH2 + NADH + O2 = (Z)-2-methylureidoacrylate + FMN + NAD(+) + H2O + H(+). Functionally, catalyzes the pyrimidine ring opening between N-3 and C-4 by an unusual flavin hydroperoxide-catalyzed mechanism, adding oxygen atoms in the process to yield ureidoacrylate peracid, that immediately reacts with FMN forming ureidoacrylate and FMN-N(5)-oxide. The FMN-N(5)-oxide reacts spontaneously with NADH to produce FMN. Requires the flavin reductase RutF to regenerate FMN in vivo. This Agrobacterium fabrum (strain C58 / ATCC 33970) (Agrobacterium tumefaciens (strain C58)) protein is Pyrimidine monooxygenase RutA (rutA).